A 628-amino-acid polypeptide reads, in one-letter code: E3 SUMO-protein ligase PIAS3 (628 aa).

Residues 1–200 (MAELGELKHM…QLRFCLCETS (200 aa)) are interaction with CCAR2. The SAP domain maps to 11–45 (VMSFRVSELQVLLGFAGRNKSGRKHELLAKALHLL). Positions 19–23 (LQVLL) match the LXXLL motif motif. Glycyl lysine isopeptide (Lys-Gly) (interchain with G-Cter in SUMO2) cross-links involve residues Lys-46, Lys-56, Lys-230, and Lys-307. The PINIT domain maps to 115-280 (MHPPLPQPVH…SLSVYLVRQL (166 aa)). Residues 312–393 (PDSEVATTSL…FMEILSSCSD (82 aa)) form an SP-RING-type zinc finger. Cys-343, His-345, Cys-366, and Cys-369 together coordinate Zn(2+). The tract at residues 450 to 460 (LTIESSSDEED) is SUMO1-binding. Glycyl lysine isopeptide (Lys-Gly) (interchain with G-Cter in SUMO2) cross-links involve residues Lys-466 and Lys-482. A disordered region spans residues 597-617 (VAPGGALREGHGGPLPSGPSL).

The protein belongs to the PIAS family. As to quaternary structure, monomer. Binds SUMO1 and UBE2I. Interacts with BCL11A, HMGA2, IRF1, MITF and NCOA2. Interacts with STAT5; the interaction occurs on stimulation by PRL. Interacts with GFI1; the interaction relieves the inhibitory effect of PIAS3 on STAT3-mediated transcriptional activity. Interacts with AR, PLAG1 and ZFHX3. Interacts with STAT3; the interaction occurs on stimulation by IL6, CNTF or OSM and inhibits the DNA binding activity of STAT3. Interacts with MTA1. Interacts with CCAR2 (via N-terminus). Interacts with TRIM8. Interacts with PRDM1/Blimp-1. In terms of processing, sumoylated. As to expression, widely expressed.

It is found in the cytoplasm. It localises to the nucleus. The protein localises to the nucleus speckle. It functions in the pathway protein modification; protein sumoylation. Functionally, functions as an E3-type small ubiquitin-like modifier (SUMO) ligase, stabilizing the interaction between UBE2I and the substrate, and as a SUMO-tethering factor. Plays a crucial role as a transcriptional coregulation in various cellular pathways, including the STAT pathway and the steroid hormone signaling pathway. Involved in regulating STAT3 signaling via inhibiting STAT3 DNA-binding and suppressing cell growth. Enhances the sumoylation of MTA1 and may participate in its paralog-selective sumoylation. Sumoylates CCAR2 which promotes its interaction with SIRT1. Diminishes the sumoylation of ZFHX3 by preventing the colocalization of ZFHX3 with SUMO1 in the nucleus. This Homo sapiens (Human) protein is E3 SUMO-protein ligase PIAS3 (PIAS3).